The sequence spans 131 residues: MSWQTYVDEHLMCEIDGQHLTAAAIIGHDGSIWAQSESFPQVKSEQITGVMNDFAEPGSLAPTGLFLGDNKYMVIQGEPGAVIRGKKGSGGVTIKKTNMALIVGIYDEPMTPGQCNMVVERLGDYLYDQGF.

It belongs to the profilin family. Occurs in many kinds of cells as a complex with monomeric actin in a 1:1 ratio.

It localises to the cytoplasm. Its subcellular location is the cytoskeleton. Functionally, binds to actin and affects the structure of the cytoskeleton. At high concentrations, profilin prevents the polymerization of actin, whereas it enhances it at low concentrations. By binding to PIP2, it inhibits the formation of IP3 and DG. This chain is Profilin-2, found in Lilium longiflorum (Trumpet lily).